Consider the following 160-residue polypeptide: Ribosomal RNA large subunit methyltransferase H (160 aa).

Residues Leu76 and Gly108 each contribute to the S-adenosyl-L-methionine site.

This sequence belongs to the RNA methyltransferase RlmH family. Homodimer.

It localises to the cytoplasm. It catalyses the reaction pseudouridine(1915) in 23S rRNA + S-adenosyl-L-methionine = N(3)-methylpseudouridine(1915) in 23S rRNA + S-adenosyl-L-homocysteine + H(+). Specifically methylates the pseudouridine at position 1915 (m3Psi1915) in 23S rRNA. In Bradyrhizobium sp. (strain BTAi1 / ATCC BAA-1182), this protein is Ribosomal RNA large subunit methyltransferase H.